The following is a 292-amino-acid chain: Glycine--tRNA ligase alpha subunit (292 aa).

This sequence belongs to the class-II aminoacyl-tRNA synthetase family. In terms of assembly, tetramer of two alpha and two beta subunits.

Its subcellular location is the cytoplasm. It catalyses the reaction tRNA(Gly) + glycine + ATP = glycyl-tRNA(Gly) + AMP + diphosphate. The chain is Glycine--tRNA ligase alpha subunit from Clostridioides difficile (strain 630) (Peptoclostridium difficile).